Consider the following 354-residue polypeptide: Chorismate synthase (354 aa).

Arg-48 is an NADP(+) binding site. FMN is bound by residues 125–127 (RAS), Gly-277, 292–296 (KPIPS), and Arg-318.

Belongs to the chorismate synthase family. Homotetramer. Requires FMNH2 as cofactor.

It carries out the reaction 5-O-(1-carboxyvinyl)-3-phosphoshikimate = chorismate + phosphate. The protein operates within metabolic intermediate biosynthesis; chorismate biosynthesis; chorismate from D-erythrose 4-phosphate and phosphoenolpyruvate: step 7/7. Its function is as follows. Catalyzes the anti-1,4-elimination of the C-3 phosphate and the C-6 proR hydrogen from 5-enolpyruvylshikimate-3-phosphate (EPSP) to yield chorismate, which is the branch point compound that serves as the starting substrate for the three terminal pathways of aromatic amino acid biosynthesis. This reaction introduces a second double bond into the aromatic ring system. This chain is Chorismate synthase, found in Nitratidesulfovibrio vulgaris (strain ATCC 29579 / DSM 644 / CCUG 34227 / NCIMB 8303 / VKM B-1760 / Hildenborough) (Desulfovibrio vulgaris).